Here is a 230-residue protein sequence, read N- to C-terminus: Dephospho-CoA kinase (230 aa).

Residues L3 to R206 enclose the DPCK domain. G8 to S15 contributes to the ATP binding site.

Belongs to the CoaE family.

It catalyses the reaction 3'-dephospho-CoA + ATP = ADP + CoA + H(+). It functions in the pathway cofactor biosynthesis; coenzyme A biosynthesis; CoA from (R)-pantothenate: step 5/5. Catalyzes the phosphorylation of the 3'-hydroxyl group of dephosphocoenzyme A to form coenzyme A. The chain is Dephospho-CoA kinase from Oryza sativa subsp. japonica (Rice).